The primary structure comprises 119 residues: Large ribosomal subunit protein uL18 (119 aa).

It belongs to the universal ribosomal protein uL18 family. In terms of assembly, part of the 50S ribosomal subunit; part of the 5S rRNA/L5/L18/L25 subcomplex. Contacts the 5S and 23S rRNAs.

This is one of the proteins that bind and probably mediate the attachment of the 5S RNA into the large ribosomal subunit, where it forms part of the central protuberance. This chain is Large ribosomal subunit protein uL18, found in Sorangium cellulosum (strain So ce56) (Polyangium cellulosum (strain So ce56)).